The chain runs to 700 residues: Putative proline-rich receptor-like protein kinase PERK6 (700 aa).

Residues 1–180 are disordered; that stretch reads MAEGQSPENS…SGGGSNSSGN (180 aa). Residues 1–186 lie on the Extracellular side of the membrane; the sequence is MAEGQSPENS…SSGNNEPNTA (186 aa). 2 stretches are compositionally biased toward pro residues: residues 9-19 and 29-47; these read NSPPSPTPPSP and SPPP…PPPD. Residues 48–137 show a composition bias toward low complexity; sequence DSSNGSPQPP…GNNNDNNNQN (90 aa). The N-linked (GlcNAc...) asparagine glycan is linked to N176. The helical transmembrane segment at 187-207 threads the bilayer; the sequence is AIVGIVAGAGLLFLVMILFCV. The Cytoplasmic segment spans residues 208–700; sequence CCCRKKKKKH…NNKTTPSRDH (493 aa). The interval 249 to 315 is disordered; the sequence is NLSQQYPGSN…GPSVPPPHPS (67 aa). Residues 255–265 are compositionally biased toward low complexity; that stretch reads PGSNGNNNWMN. Residues 266 to 286 show a composition bias toward pro residues; that stretch reads SPPPPPPGSWQPSPPPPPPPV. A Phosphothreonine modification is found at T326. The 279-residue stretch at 337–615 folds into the Protein kinase domain; that stretch reads FSQSRLLGQG…VRALEGDATL (279 aa). ATP-binding positions include 343-351 and K365; that span reads LGQGGFGYV. Y410 carries the phosphotyrosine modification. D461 serves as the catalytic Proton acceptor. 2 positions are modified to phosphoserine: S465 and S494. Phosphothreonine occurs at positions 495 and 500. Y508 bears the Phosphotyrosine mark. 2 disordered regions span residues 616–642 and 659–700; these read DDLS…DSST and EYGA…SRDH. Polar residues predominate over residues 689 to 700; that stretch reads ANNNKTTPSRDH.

It belongs to the protein kinase superfamily. Ser/Thr protein kinase family. In terms of tissue distribution, mostly expressed in flower buds.

It is found in the cell membrane. The catalysed reaction is L-seryl-[protein] + ATP = O-phospho-L-seryl-[protein] + ADP + H(+). The enzyme catalyses L-threonyl-[protein] + ATP = O-phospho-L-threonyl-[protein] + ADP + H(+). In Arabidopsis thaliana (Mouse-ear cress), this protein is Putative proline-rich receptor-like protein kinase PERK6 (PERK6).